The chain runs to 299 residues: Small ribosomal subunit biogenesis GTPase RsgA (299 aa).

In terms of domain architecture, CP-type G spans 64-225 (KNEMIRPPVA…VGDTPGFSSL (162 aa)). GTP is bound by residues 113-116 (TKTD) and 168-176 (GQTGAGKST). Zn(2+)-binding residues include Cys-249, Cys-254, His-256, and Cys-262.

This sequence belongs to the TRAFAC class YlqF/YawG GTPase family. RsgA subfamily. As to quaternary structure, monomer. Associates with 30S ribosomal subunit, binds 16S rRNA. It depends on Zn(2+) as a cofactor.

The protein resides in the cytoplasm. One of several proteins that assist in the late maturation steps of the functional core of the 30S ribosomal subunit. Helps release RbfA from mature subunits. May play a role in the assembly of ribosomal proteins into the subunit. Circularly permuted GTPase that catalyzes slow GTP hydrolysis, GTPase activity is stimulated by the 30S ribosomal subunit. The protein is Small ribosomal subunit biogenesis GTPase RsgA of Latilactobacillus sakei subsp. sakei (strain 23K) (Lactobacillus sakei subsp. sakei).